The chain runs to 214 residues: Alpha-S1-casein (214 aa).

Positions 1–15 (MKLLILTCLVAVALA) are cleaved as a signal peptide. A phosphoserine mark is found at Ser-63, Ser-79, Ser-81, Ser-82, Ser-83, and Ser-90. 2 repeats span residues 85-99 (EIVP…IQKE) and 125-140 (EIVP…SMKE).

It belongs to the alpha-casein family. As to expression, mammary gland specific. Secreted in milk.

Its subcellular location is the secreted. In terms of biological role, important role in the capacity of milk to transport calcium phosphate. This is Alpha-S1-casein (CSN1S1) from Bubalus bubalis (Domestic water buffalo).